A 173-amino-acid polypeptide reads, in one-letter code: Terpene cyclase subB (173 aa).

The next 4 membrane-spanning stretches (helical) occupy residues 11 to 31 (PGYL…GLGW), 51 to 71 (ALMP…IYPF), 112 to 132 (LPFI…ALAL), and 141 to 161 (AFSA…QLLS).

It belongs to the paxB family.

It is found in the membrane. It participates in secondary metabolite biosynthesis; terpenoid biosynthesis. Its function is as follows. Terpene cyclase; part of the gene cluster that mediates the biosynthesis of the immunosuppressants subglutinols, meroterpenoids consisting of an alpha-pyrone (4-hydroxy-5,6-dimethyl-2-pyrone) moiety attached to a decalin core fused to a five-membered cyclic ether carrying a prenylside chain. The first step of the pathway is the synthesis of the alpha-pyrone moiety by the polyketide synthase subA via condensation of one acetyl-CoA starter unit with 3 malonyl-CoA units and 2 methylations. The alpha-pyrone is then combined with geranylgeranyl pyrophosphate (GGPP) formed by the GGPP synthase subD through the action of the prenyltransferase subC to yield a linear alpha-pyrone diterpenoid. Subsequent steps in the subglutinol biosynthetic pathway involve the decalin core formation, which is thought to be initiated by the epoxidation of the C10-C11 olefin by the FAD-dependent oxidoreductase subE. The following cyclization cascade would be catalyzed by the terpene cyclase subB. Lastly, the FAD-dependent dehydrogenase subF probably catalyzes the five-membered cyclic ether formation to complete the formation of subglutinol A. Subsequent redox reactions appear to give rise to subglutinol C and D, however, it remains unclear which enzymes are responsible for these transformations. SubD may have secondary function in the conversion of the identified subglutinols to subglutinol analog 45, which seems to be the major product of the cluster. This chain is Terpene cyclase subB, found in Metarhizium robertsii (strain ARSEF 23 / ATCC MYA-3075) (Metarhizium anisopliae (strain ARSEF 23)).